Reading from the N-terminus, the 75-residue chain is UPF0352 protein KPN78578_25810 (75 aa).

This sequence belongs to the UPF0352 family.

This Klebsiella pneumoniae subsp. pneumoniae (strain ATCC 700721 / MGH 78578) protein is UPF0352 protein KPN78578_25810.